The following is a 495-amino-acid chain: Trimethylamine methyltransferase MttB (495 aa).

Residue Pyl-334 is a non-standard amino acid, pyrrolysine.

The protein belongs to the trimethylamine methyltransferase family. Can form a complex with MttC.

The catalysed reaction is Co(I)-[trimethylamine-specific corrinoid protein] + trimethylamine + H(+) = methyl-Co(III)-[trimethylamine-specific corrinoid protein] + dimethylamine. It participates in one-carbon metabolism; methanogenesis from trimethylamine. Its function is as follows. Catalyzes the transfer of a methyl group from trimethylamine to the corrinoid cofactor of MttC. This Methanosarcina barkeri protein is Trimethylamine methyltransferase MttB.